Consider the following 186-residue polypeptide: ATP synthase subunit delta, chloroplastic (186 aa).

It belongs to the ATPase delta chain family. F-type ATPases have 2 components, F(1) - the catalytic core - and F(0) - the membrane proton channel. F(1) has five subunits: alpha(3), beta(3), gamma(1), delta(1), epsilon(1). CF(0) has four main subunits: a(1), b(1), b'(1) and c(10-14). The alpha and beta chains form an alternating ring which encloses part of the gamma chain. F(1) is attached to F(0) by a central stalk formed by the gamma and epsilon chains, while a peripheral stalk is formed by the delta, b and b' chains.

Its subcellular location is the plastid. The protein localises to the chloroplast thylakoid membrane. F(1)F(0) ATP synthase produces ATP from ADP in the presence of a proton or sodium gradient. F-type ATPases consist of two structural domains, F(1) containing the extramembraneous catalytic core and F(0) containing the membrane proton channel, linked together by a central stalk and a peripheral stalk. During catalysis, ATP synthesis in the catalytic domain of F(1) is coupled via a rotary mechanism of the central stalk subunits to proton translocation. Its function is as follows. This protein is part of the stalk that links CF(0) to CF(1). It either transmits conformational changes from CF(0) to CF(1) or is implicated in proton conduction. This Porphyra purpurea (Red seaweed) protein is ATP synthase subunit delta, chloroplastic.